The sequence spans 597 residues: MFS-type transporter FPY5 (597 aa).

The tract at residues 1–55 (MSETTGLPLKHLQGSPPGTPVNTNNESNEASPDDGCRLPDTVTEAEASSDNHGSV) is disordered. Composition is skewed to polar residues over residues 20–30 (PVNTNNESNEA) and 46–55 (EASSDNHGSV). A glycan (N-linked (GlcNAc...) asparagine) is linked at Asn25. An N-linked (GlcNAc...) asparagine glycan is attached at Asn72. Transmembrane regions (helical) follow at residues 94–114 (LSLL…VSIV), 120–140 (FNMA…FLII), 147–167 (IFGC…FSMA), 183–203 (FQGM…PLMV), 214–234 (IMSS…GAIT), 241–261 (WVFY…AFSV), 286–306 (VDFV…FALE), 316–336 (SGAI…FIAW), and 360–380 (FVMG…AALI). N-linked (GlcNAc...) asparagine glycosylation occurs at Asn390. Transmembrane regions (helical) follow at residues 402–422 (LPLL…VSKL), 424–444 (VPPL…VGLY), 463–483 (IMGL…PLVV), 498–518 (IRVL…INHI), and 562–582 (EQMR…VLLV).

Belongs to the major facilitator superfamily. TCR/Tet family.

The protein localises to the membrane. It participates in secondary metabolite biosynthesis. MFS-type transporter; part of the gene cluster that mediates the biosynthesis of the gamma-pyrones fusapyrone (FPY) and deoxyfusapyrone (dFPY). The polypeptide is MFS-type transporter FPY5 (Fusarium mangiferae (Mango malformation disease fungus)).